The chain runs to 240 residues: Transcriptional regulatory protein rxt2 (240 aa).

The protein belongs to the RXT2 family. In terms of assembly, component of the RPD3C(L) complex.

The protein localises to the nucleus. Its function is as follows. Component of the RPD3C(L) histone deacetylase complex (HDAC) responsible for the deacetylation of lysine residues on the N-terminal part of the core histones (H2A, H2B, H3 and H4). Histone deacetylation gives a tag for epigenetic repression and plays an important role in transcriptional regulation, cell cycle progression and developmental events. The protein is Transcriptional regulatory protein rxt2 (rtx2) of Schizosaccharomyces pombe (strain 972 / ATCC 24843) (Fission yeast).